Here is a 449-residue protein sequence, read N- to C-terminus: MIAARGAPEIEKAKLRLEIAELQAVLNAKEQQLLELQSTISTGASNGGEPESKQDHQKLSNDDIARYSRQLILPDFGIGGQLKLKNSAVLIVGIGGLGCPAAQYLAGAGCGSLGLVDYDQVERSNLHRQTLHTVARCGLSKAESARIALLELNPHCHITCHASLLNRFNAMDIMHGYDVVLDCSDNVATRYLLNDACVMLGKPLVSGSALKLDGQITVYNYGTQGPCYRCIFPVPPPPEAVTNCGDGGVLGAVTGTIGAMQALEAIKLIVGLGDVLAGRLLIFDGSSCQFRNIRIRSKRANCHVCSDQPLITQLIDYEVFCGMHATDKDNPLQLLEPEQRITVVDYQKSLQDKPHLLLDVRAQAEFEICQLPQAINVPLAQILDGSYLQQLDAQFKSSGFPIVVVCRRGNDSQIAVQHMKNQFPEHFIRDLKGGLHAWTNQIDENFPIY.

ATP is bound by residues Gly-96, Asp-117, Ser-124–Arg-128, Lys-141, and Asp-185–Asn-186. Zn(2+)-binding residues include Cys-227 and Cys-230. Cys-244 acts as the Glycyl thioester intermediate; for adenylyltransferase activity in catalysis. Zn(2+) is bound by residues Cys-302 and Cys-305. The region spanning Gln-351–Pro-447 is the Rhodanese domain. Cys-406 acts as the Cysteine persulfide intermediate; for sulfurtransferase activity in catalysis.

In the N-terminal section; belongs to the HesA/MoeB/ThiF family. UBA4 subfamily. It depends on Zn(2+) as a cofactor.

It is found in the cytoplasm. The protein resides in the cytosol. It carries out the reaction [molybdopterin-synthase sulfur-carrier protein]-C-terminal Gly-Gly + ATP + H(+) = [molybdopterin-synthase sulfur-carrier protein]-C-terminal Gly-Gly-AMP + diphosphate. It catalyses the reaction [molybdopterin-synthase sulfur-carrier protein]-C-terminal Gly-Gly-AMP + S-sulfanyl-L-cysteinyl-[cysteine desulfurase] + AH2 = [molybdopterin-synthase sulfur-carrier protein]-C-terminal-Gly-aminoethanethioate + L-cysteinyl-[cysteine desulfurase] + A + AMP + 2 H(+). It functions in the pathway tRNA modification; 5-methoxycarbonylmethyl-2-thiouridine-tRNA biosynthesis. The protein operates within cofactor biosynthesis; molybdopterin biosynthesis. Functionally, plays a central role in 2-thiolation of mcm(5)S(2)U at tRNA wobble positions of cytosolic tRNA(Lys), tRNA(Glu) and tRNA(Gln). Also essential during biosynthesis of the molybdenum cofactor. Acts by mediating the C-terminal thiocarboxylation of sulfur carriers URM1 and MOCS2A. Its N-terminus first activates URM1 and MOCS2A as acyl-adenylates (-COAMP), then the persulfide sulfur on the catalytic cysteine is transferred to URM1 and MOCS2A to form thiocarboxylation (-COSH) of their C-terminus. The reaction probably involves hydrogen sulfide that is generated from the persulfide intermediate and that acts as a nucleophile towards URM1 and MOCS2A. Subsequently, a transient disulfide bond is formed. Does not use thiosulfate as sulfur donor; NFS1 probably acting as a sulfur donor for thiocarboxylation reactions. This is Adenylyltransferase and sulfurtransferase MOCS3 from Drosophila grimshawi (Hawaiian fruit fly).